The sequence spans 453 residues: Allantoinase (453 aa).

Zn(2+)-binding residues include histidine 59, histidine 61, lysine 146, histidine 186, histidine 242, and aspartate 315. Lysine 146 bears the N6-carboxylysine mark.

The protein belongs to the metallo-dependent hydrolases superfamily. Allantoinase family. As to quaternary structure, homotetramer. The cofactor is Zn(2+). Post-translationally, carboxylation allows a single lysine to coordinate two zinc ions.

It carries out the reaction (S)-allantoin + H2O = allantoate + H(+). Its pathway is nitrogen metabolism; (S)-allantoin degradation; allantoate from (S)-allantoin: step 1/1. Its function is as follows. Catalyzes the conversion of allantoin (5-ureidohydantoin) to allantoic acid by hydrolytic cleavage of the five-member hydantoin ring. This chain is Allantoinase, found in Escherichia coli (strain 55989 / EAEC).